A 142-amino-acid polypeptide reads, in one-letter code: Large ribosomal subunit protein uL13 (142 aa).

The protein belongs to the universal ribosomal protein uL13 family. Part of the 50S ribosomal subunit.

In terms of biological role, this protein is one of the early assembly proteins of the 50S ribosomal subunit, although it is not seen to bind rRNA by itself. It is important during the early stages of 50S assembly. This Methylococcus capsulatus (strain ATCC 33009 / NCIMB 11132 / Bath) protein is Large ribosomal subunit protein uL13.